Here is an 866-residue protein sequence, read N- to C-terminus: Probable outer membrane usher protein ElfC (866 aa).

The signal sequence occupies residues 1–35; the sequence is MYRTHRQHSLLSSGGVPSFIGGLVVFVSAAFNAQA.

Belongs to the fimbrial export usher family.

Its subcellular location is the cell outer membrane. Its function is as follows. Part of the elfADCG fimbrial operon, which could be required for adherence to host epithelial cells. Could be involved in the export and assembly of the ElfA fimbrial subunits across the outer membrane. The chain is Probable outer membrane usher protein ElfC (elfC) from Escherichia coli O157:H7.